The following is a 315-amino-acid chain: Protease HtpX homolog (315 aa).

A helical transmembrane segment spans residues 16-36 (LFMGIGYLIGGASGALIALVV). Residue histidine 130 coordinates Zn(2+). The active site involves glutamate 131. Histidine 134 provides a ligand contact to Zn(2+). 2 helical membrane-spanning segments follow: residues 145–165 (ITAT…FFGG) and 172–192 (GPGL…AMLV). Zn(2+) is bound at residue glutamate 201. Positions 282–315 (GGGGASIGRPAGPSPRGAPRSPWSGQPRARGPWG) are disordered. A compositionally biased stretch (low complexity) spans 288-303 (IGRPAGPSPRGAPRSP).

The protein belongs to the peptidase M48B family. The cofactor is Zn(2+).

It is found in the cell inner membrane. The protein is Protease HtpX homolog of Rhodopseudomonas palustris (strain BisB5).